Reading from the N-terminus, the 37-residue chain is Large ribosomal subunit protein bL36 (37 aa).

It belongs to the bacterial ribosomal protein bL36 family.

The chain is Large ribosomal subunit protein bL36 from Nitratiruptor sp. (strain SB155-2).